The chain runs to 81 residues: Photosystem I iron-sulfur center (81 aa).

4Fe-4S ferredoxin-type domains lie at 2-31 (AHSV…MIPW) and 39-68 (IASA…VRVY). Positions 11, 14, 17, 21, 48, 51, 54, and 58 each coordinate [4Fe-4S] cluster.

The eukaryotic PSI reaction center is composed of at least 11 subunits. Requires [4Fe-4S] cluster as cofactor.

It is found in the plastid. The protein resides in the chloroplast thylakoid membrane. It catalyses the reaction reduced [plastocyanin] + hnu + oxidized [2Fe-2S]-[ferredoxin] = oxidized [plastocyanin] + reduced [2Fe-2S]-[ferredoxin]. In terms of biological role, apoprotein for the two 4Fe-4S centers FA and FB of photosystem I (PSI); essential for photochemical activity. FB is the terminal electron acceptor of PSI, donating electrons to ferredoxin. The C-terminus interacts with PsaA/B/D and helps assemble the protein into the PSI complex. Required for binding of PsaD and PsaE to PSI. PSI is a plastocyanin-ferredoxin oxidoreductase, converting photonic excitation into a charge separation, which transfers an electron from the donor P700 chlorophyll pair to the spectroscopically characterized acceptors A0, A1, FX, FA and FB in turn. The polypeptide is Photosystem I iron-sulfur center (Zygnema circumcarinatum (Green alga)).